The following is a 795-amino-acid chain: Phenylalanine--tRNA ligase beta subunit (795 aa).

The tRNA-binding domain occupies 39 to 149; sequence SGEFSGVVVA…ADAPIGVDIR (111 aa). In terms of domain architecture, B5 spans 402-477; the sequence is PKQPIIRLRR…RIYGYNRIPN (76 aa). 4 residues coordinate Mg(2+): Asp-455, Asp-461, Glu-464, and Glu-465. The region spanning 701-794 is the FDX-ACB domain; that stretch reads SKFPANNRDI…LAQRFQASLR (94 aa).

Belongs to the phenylalanyl-tRNA synthetase beta subunit family. Type 1 subfamily. In terms of assembly, tetramer of two alpha and two beta subunits. Mg(2+) serves as cofactor.

It localises to the cytoplasm. It carries out the reaction tRNA(Phe) + L-phenylalanine + ATP = L-phenylalanyl-tRNA(Phe) + AMP + diphosphate + H(+). The protein is Phenylalanine--tRNA ligase beta subunit of Haemophilus ducreyi (strain 35000HP / ATCC 700724).